Reading from the N-terminus, the 293-residue chain is Tumor necrosis factor receptor type 1-associated DEATH domain protein (293 aa).

The Nuclear export signal signature appears at 156-171; the sequence is LRDDEVTQLEQQLQNS. Positions 200–290 constitute a Death domain; that stretch reads TPADQQRFAA…SMAEIMLGIQ (91 aa). Positions 216-229 match the Nuclear localization signal motif; sequence KRVGRALQKNCRAL.

As to quaternary structure, heterodimer with tnfrsf1a.

Its subcellular location is the nucleus. The protein resides in the cytoplasm. The protein localises to the cytoskeleton. Its function is as follows. Adapter molecule for tnfrsf1a that specifically associates with the cytoplasmic domain of activated tnfrsf1a mediating its interaction with fadd. In Danio rerio (Zebrafish), this protein is Tumor necrosis factor receptor type 1-associated DEATH domain protein.